The sequence spans 273 residues: 2,3,4,5-tetrahydropyridine-2,6-dicarboxylate N-succinyltransferase (273 aa).

Substrate contacts are provided by Arg-104 and Asp-141.

Belongs to the transferase hexapeptide repeat family. As to quaternary structure, homotrimer.

The protein resides in the cytoplasm. The enzyme catalyses (S)-2,3,4,5-tetrahydrodipicolinate + succinyl-CoA + H2O = (S)-2-succinylamino-6-oxoheptanedioate + CoA. Its pathway is amino-acid biosynthesis; L-lysine biosynthesis via DAP pathway; LL-2,6-diaminopimelate from (S)-tetrahydrodipicolinate (succinylase route): step 1/3. The polypeptide is 2,3,4,5-tetrahydropyridine-2,6-dicarboxylate N-succinyltransferase (Nitrosomonas europaea (strain ATCC 19718 / CIP 103999 / KCTC 2705 / NBRC 14298)).